Reading from the N-terminus, the 566-residue chain is Serine/threonine-protein kinase ppk14 (566 aa).

Residues 1–31 (MNELHDGESSEEGRINVEDHLEEAKKDDTGH) show a composition bias toward basic and acidic residues. Disordered stretches follow at residues 1-39 (MNELHDGESSEEGRINVEDHLEEAKKDDTGHWKHSGTAK) and 60-152 (SRKK…EKLK). Positions 74–85 (AANQSPSGAPES) are enriched in polar residues. Basic residues predominate over residues 119-129 (SFFKSGRKKKD). Positions 134-145 (RNVSRSNGADTS) are enriched in polar residues. The Protein kinase domain occupies 195–485 (FEKVFLLGKG…AADVKLHPFF (291 aa)). Residues 201–209 (LGKGDVGRV) and Lys224 contribute to the ATP site. Catalysis depends on Asp320, which acts as the Proton acceptor. At Thr379 the chain carries Phosphothreonine. Ser381 carries the phosphoserine modification. Position 385 is a phosphothreonine (Thr385).

This sequence belongs to the protein kinase superfamily. Ser/Thr protein kinase family. KIN82 subfamily.

The catalysed reaction is L-seryl-[protein] + ATP = O-phospho-L-seryl-[protein] + ADP + H(+). It carries out the reaction L-threonyl-[protein] + ATP = O-phospho-L-threonyl-[protein] + ADP + H(+). In Schizosaccharomyces pombe (strain 972 / ATCC 24843) (Fission yeast), this protein is Serine/threonine-protein kinase ppk14 (ppk14).